Here is a 787-residue protein sequence, read N- to C-terminus: Pyridoxal-dependent decarboxylase domain-containing protein 1 (787 aa).

Positions 26–44 are enriched in basic and acidic residues; the sequence is MLEKSPRRTEEENGKKPVS. The segment at 26–52 is disordered; the sequence is MLEKSPRRTEEENGKKPVSEDIPGPLQ. The residue at position 652 (S652) is a Phosphoserine. Positions 682-787 are disordered; it reads QGTGVTPPPT…SQVEELERLR (106 aa). Phosphothreonine occurs at positions 687 and 691. Phosphoserine occurs at positions 710, 718, 722, and 748. Residues 725-748 show a composition bias toward basic and acidic residues; the sequence is HIEDLEKVEQLSSGLEHDNLEAHS. Residues 759-771 show a composition bias toward polar residues; the sequence is TARQTEALQNQAQ. Over residues 772–787 the composition is skewed to basic and acidic residues; it reads HQEDDHSQVEELERLR. S778 carries the post-translational modification Phosphoserine.

This sequence belongs to the group II decarboxylase family. Pyridoxal 5'-phosphate serves as cofactor.

This is Pyridoxal-dependent decarboxylase domain-containing protein 1 (Pdxdc1) from Mus musculus (Mouse).